Here is a 472-residue protein sequence, read N- to C-terminus: 6-phosphogluconate dehydrogenase, decarboxylating (472 aa).

NADP(+) is bound by residues 10 to 15 (GMAVMG), 33 to 35 (NRT), 74 to 76 (VQA), and Asn-102. Residues Asn-102 and 128–130 (SGG) contribute to the substrate site. Lys-184 acts as the Proton acceptor in catalysis. A substrate-binding site is contributed by 187–188 (HN). The active-site Proton donor is Glu-191. Residues Tyr-192, Lys-262, Arg-289, Arg-447, and His-453 each contribute to the substrate site.

Belongs to the 6-phosphogluconate dehydrogenase family. Homodimer.

The catalysed reaction is 6-phospho-D-gluconate + NADP(+) = D-ribulose 5-phosphate + CO2 + NADPH. The protein operates within carbohydrate degradation; pentose phosphate pathway; D-ribulose 5-phosphate from D-glucose 6-phosphate (oxidative stage): step 3/3. Functionally, catalyzes the oxidative decarboxylation of 6-phosphogluconate to ribulose 5-phosphate and CO(2), with concomitant reduction of NADP to NADPH. In Lactococcus lactis subsp. lactis (strain IL1403) (Streptococcus lactis), this protein is 6-phosphogluconate dehydrogenase, decarboxylating (gnd).